The primary structure comprises 376 residues: Dehydrogenase/reductase SDR family member FEY (376 aa).

Residue Ser-2 is modified to N-acetylserine. Position 61–85 (61–85 (VVTGSTSGIGRETARQLAEAGAHVV)) interacts with NAD(+). Substrate is bound at residue Ser-199. The active-site Proton acceptor is the Tyr-227.

The protein belongs to the short-chain dehydrogenases/reductases (SDR) family. As to expression, expressed in roots, stems, leaves and flowers and, at lower levels, in siliques.

In terms of biological role, putative oxidoreductase. Required for vegetative shoot apex development, especially during leaf positioning and for shoot apical meristem (SAM) maintenance. This Arabidopsis thaliana (Mouse-ear cress) protein is Dehydrogenase/reductase SDR family member FEY.